A 175-amino-acid polypeptide reads, in one-letter code: Shikimate kinase (175 aa).

16–21 (GAGKST) serves as a coordination point for ATP. Ser-20 is a binding site for Mg(2+). Residues Asp-38, Arg-62, and Gly-84 each coordinate substrate. Residue Arg-122 participates in ATP binding. Arg-141 serves as a coordination point for substrate.

It belongs to the shikimate kinase family. As to quaternary structure, monomer. Requires Mg(2+) as cofactor.

Its subcellular location is the cytoplasm. It catalyses the reaction shikimate + ATP = 3-phosphoshikimate + ADP + H(+). It participates in metabolic intermediate biosynthesis; chorismate biosynthesis; chorismate from D-erythrose 4-phosphate and phosphoenolpyruvate: step 5/7. Catalyzes the specific phosphorylation of the 3-hydroxyl group of shikimic acid using ATP as a cosubstrate. This Legionella pneumophila (strain Paris) protein is Shikimate kinase.